Here is a 322-residue protein sequence, read N- to C-terminus: Tetraacyldisaccharide 4'-kinase (322 aa).

ATP is bound at residue 54–61 (SVGGTGKT).

The protein belongs to the LpxK family.

It carries out the reaction a lipid A disaccharide + ATP = a lipid IVA + ADP + H(+). Its pathway is glycolipid biosynthesis; lipid IV(A) biosynthesis; lipid IV(A) from (3R)-3-hydroxytetradecanoyl-[acyl-carrier-protein] and UDP-N-acetyl-alpha-D-glucosamine: step 6/6. In terms of biological role, transfers the gamma-phosphate of ATP to the 4'-position of a tetraacyldisaccharide 1-phosphate intermediate (termed DS-1-P) to form tetraacyldisaccharide 1,4'-bis-phosphate (lipid IVA). This Francisella tularensis subsp. holarctica (strain FTNF002-00 / FTA) protein is Tetraacyldisaccharide 4'-kinase.